Reading from the N-terminus, the 152-residue chain is Protein-export protein SecB (152 aa).

It belongs to the SecB family. In terms of assembly, homotetramer, a dimer of dimers. One homotetramer interacts with 1 SecA dimer.

It is found in the cytoplasm. One of the proteins required for the normal export of preproteins out of the cell cytoplasm. It is a molecular chaperone that binds to a subset of precursor proteins, maintaining them in a translocation-competent state. It also specifically binds to its receptor SecA. In Rickettsia conorii (strain ATCC VR-613 / Malish 7), this protein is Protein-export protein SecB.